The following is an 809-amino-acid chain: Lon protease (809 aa).

In terms of domain architecture, Lon N-terminal spans 42–242 (LVIYPLGGRP…KVLTLLKKEL (201 aa)). 395-402 (GPPGVGKT) is an ATP binding site. The 181-residue stretch at 629–809 (LTGVGIVTGL…YAEVAKLVFG (181 aa)) folds into the Lon proteolytic domain. Catalysis depends on residues S716 and K759.

Belongs to the peptidase S16 family. Homohexamer. Organized in a ring with a central cavity.

Its subcellular location is the cytoplasm. The enzyme catalyses Hydrolysis of proteins in presence of ATP.. Functionally, ATP-dependent serine protease that mediates the selective degradation of mutant and abnormal proteins as well as certain short-lived regulatory proteins. Required for cellular homeostasis and for survival from DNA damage and developmental changes induced by stress. Degrades polypeptides processively to yield small peptide fragments that are 5 to 10 amino acids long. Binds to DNA in a double-stranded, site-specific manner. This is Lon protease from Magnetococcus marinus (strain ATCC BAA-1437 / JCM 17883 / MC-1).